Reading from the N-terminus, the 319-residue chain is Ornithine carbamoyltransferase (319 aa).

Carbamoyl phosphate-binding positions include 63-66 (STRT), Q90, R114, and 141-144 (HPCQ). Residues N172, D236, and 240–241 (SM) contribute to the L-ornithine site. Residues 276–277 (CL) and R304 each bind carbamoyl phosphate.

This sequence belongs to the aspartate/ornithine carbamoyltransferase superfamily. OTCase family.

The protein localises to the cytoplasm. It catalyses the reaction carbamoyl phosphate + L-ornithine = L-citrulline + phosphate + H(+). The protein operates within amino-acid biosynthesis; L-arginine biosynthesis; L-arginine from L-ornithine and carbamoyl phosphate: step 1/3. In terms of biological role, reversibly catalyzes the transfer of the carbamoyl group from carbamoyl phosphate (CP) to the N(epsilon) atom of ornithine (ORN) to produce L-citrulline. This is Ornithine carbamoyltransferase from Halalkalibacterium halodurans (strain ATCC BAA-125 / DSM 18197 / FERM 7344 / JCM 9153 / C-125) (Bacillus halodurans).